The primary structure comprises 316 residues: DNA-directed RNA polymerase subunit alpha (316 aa).

The segment at 1 to 233 is alpha N-terminal domain (alpha-NTD); sequence MCMSQFPIEF…HWFNPLQTLE (233 aa). The alpha C-terminal domain (alpha-CTD) stretch occupies residues 245–316; that stretch reads MAQLSNMLIE…LHCQLKKYVD (72 aa).

Belongs to the RNA polymerase alpha chain family. In plastids the minimal PEP RNA polymerase catalytic core is composed of four subunits: alpha, beta, beta', and beta''. When a (nuclear-encoded) sigma factor is associated with the core the holoenzyme is formed, which can initiate transcription.

The protein resides in the plastid. It is found in the chloroplast. The catalysed reaction is RNA(n) + a ribonucleoside 5'-triphosphate = RNA(n+1) + diphosphate. DNA-dependent RNA polymerase catalyzes the transcription of DNA into RNA using the four ribonucleoside triphosphates as substrates. The chain is DNA-directed RNA polymerase subunit alpha from Cyanidioschyzon merolae (strain NIES-3377 / 10D) (Unicellular red alga).